Reading from the N-terminus, the 78-residue chain is Toxin BmTxKS4 (78 aa).

The signal sequence occupies residues 1–21 (MKLKISFLILVLFSVFFAIEG). Residues 22–32 (IIKWFPASVNG) constitute a propeptide that is removed on maturation.

Post-translationally, contains 3 disulfide bonds. Expressed by the venom gland.

It localises to the secreted. Functionally, reversibly inhibits potassium channels. The chain is Toxin BmTxKS4 from Olivierus martensii (Manchurian scorpion).